The primary structure comprises 79 residues: Hematopoietic cell signal transducer (79 aa).

Positions 1 to 18 are cleaved as a signal peptide; it reads MIHPGHILFLLLLPVAAA. The Extracellular segment spans residues 19 to 34; sequence QTTPGSCSGCGSLSLP. The helical transmembrane segment at 35 to 55 threads the bilayer; the sequence is LLAGLVAADAVASPLIVGAVF. Residues 56–79 lie on the Cytoplasmic side of the membrane; the sequence is LCARPRRSPAQGDGKVYINMPGRG. The residue at position 72 (Tyr-72) is a Phosphotyrosine. The GRB2 binding site stretch occupies residues 72 to 74; that stretch reads YIN. A PIK3R1 binding site region spans residues 72–75; it reads YINM.

Belongs to the DAP10 family. In terms of assembly, homodimer; Disulfide-linked. Heterohexamer composed of four subunits of HCST/DAP10 and two subunits of KLRK1. Interacts (via transmembrane domain) with KLRK1 (via transmembrane domain); the interaction is required for KLRK1 NK cell surface and induces NK cell-mediated cytotoxicity. Interacts with PIK3R1 and GRB2. Interacts with CLEC5A. Forms an CLEC5A/TYROBP/HCST trimolecular complex depending almost solely on TYROBP. Interacts with CD300H. Phosphorylated; PIK3R1 and GRB2 associate specifically with tyrosine-phosphorylated HCST. Post-translationally, O-glycosylated.

It is found in the membrane. Transmembrane adapter protein which associates with KLRK1 to form an activation receptor KLRK1-HCST in lymphoid and myeloid cells; this receptor plays a major role in triggering cytotoxicity against target cells expressing cell surface ligands such as MHC class I chain-related MICA and MICB, and UL16-binding proteins (ULBPs); these ligands are up-regulated by stress conditions and pathological state such as viral infection and tumor transformation. Functions as a docking site for PI3-kinase PIK3R1 and GRB2. Interaction of ULBPs with KLRK1-HCST triggers calcium mobilization and activation of the PIK3R1, MAP2K/ERK, and JAK2/STAT5 signaling pathways. Both PIK3R1 and GRB2 are required for full KLRK1-HCST-mediated activation and ultimate killing of target cells. In NK cells, KLRK1-HCST signaling directly induces cytotoxicity and enhances cytokine production initiated via DAP12/TYROBP-associated receptors. In T-cells, it provides primarily costimulation for TCR-induced signals. KLRK1-HCST receptor plays a role in immune surveillance against tumors and is required for cytolysis of tumors cells; indeed, melanoma cells that do not express KLRK1 ligands escape from immune surveillance mediated by NK cells. In Macaca mulatta (Rhesus macaque), this protein is Hematopoietic cell signal transducer (HCST).